Reading from the N-terminus, the 533-residue chain is Decreased expression in renal and prostate cancer protein (533 aa).

The segment covering 1–12 has biased composition (basic and acidic residues); it reads MKEPRIFPRERP. Disordered stretches follow at residues 1 to 31, 67 to 164, 177 to 259, and 299 to 350; these read MKEPRIFPRERPTPWTRAPLPPRGRLDGGPV, QNPS…PDPR, MRAG…RAGG, and ASGN…PNSA. Position 160 is a phosphoserine (Ser160). Residues 299–309 are compositionally biased toward polar residues; sequence ASGNMGTNPPT. Arg368 carries the asymmetric dimethylarginine modification. Arg396 carries the omega-N-methylarginine modification. Ser432 carries the phosphoserine modification.

Belongs to the DERPC family.

It is found in the nucleus. Its function is as follows. Potential tumor suppressor. The chain is Decreased expression in renal and prostate cancer protein from Mus musculus (Mouse).